The sequence spans 1439 residues: ABC transporter G family member 14 (1439 aa).

The span at 1–17 (MEENSNKFEQELKEIGQ) shows a compositional bias: basic and acidic residues. The tract at residues 1-21 (MEENSNKFEQELKEIGQDRNQ) is disordered. The region spanning 117–370 (FSILNFFKPS…FMSLGFDCEP (254 aa)) is the ABC transporter 1 domain. The ABC transmembrane type-2 1 domain maps to 475–700 (LNDKFGLFTK…GSEFDAYRIC (226 aa)). The next 6 membrane-spanning stretches (helical) occupy residues 479 to 499 (FGLF…SSVF), 516 to 536 (ILSA…MTFI), 564 to 584 (IPFT…MFGL), 589 to 609 (GKFF…TALF), 614 to 634 (YLCP…IFML), and 734 to 754 (IIVY…MEYI). Residues 805 to 1049 (FTWQNIRYTV…LTSYFERHGV (245 aa)) form the ABC transporter 2 domain. 841-848 (GSSGAGKT) lines the ATP pocket. The region spanning 1141–1366 (YYTYGSFVQS…YNTCQNYTSA (226 aa)) is the ABC transmembrane type-2 2 domain. The next 6 helical transmembrane spans lie at 1144–1164 (YGSF…FWNL), 1175–1195 (IFFI…VMPQ), 1217–1237 (FAIS…TIFF), 1256–1276 (FYFW…GQAV), 1283–1303 (MFFA…FSGV), and 1413–1433 (VGII…FVYL).

It belongs to the ABC transporter superfamily. ABCG family. PDR (TC 3.A.1.205) subfamily.

It is found in the membrane. This chain is ABC transporter G family member 14 (abcG14), found in Dictyostelium discoideum (Social amoeba).